A 230-amino-acid chain; its full sequence is Protein UPS2, mitochondrial (230 aa).

Positions 1-175 constitute a PRELI/MSF1 domain; that stretch reads MKLFQNSYDF…VLQVFSENWE (175 aa).

The protein belongs to the slowmo family. In terms of assembly, interacts with MDM35.

The protein localises to the mitochondrion inner membrane. Its subcellular location is the mitochondrion intermembrane space. In terms of biological role, required for mitochondrial cristae morphogenesis and MGM1-processing. Controls the stability of mitochondrial phosphatidylethanolamine (PE). With UPS1, controls the level of cardiolipin in mitochondria. Cardiolipin is a unique phospholipid with four fatty acid chains and is present mainly in the mitochondrial inner membrane where it stabilizes the electron transport chain supercomplex between complexes III and IV through direct interaction of their subunits. The chain is Protein UPS2, mitochondrial (UPS2) from Saccharomyces cerevisiae (strain ATCC 204508 / S288c) (Baker's yeast).